The sequence spans 143 residues: Small ribosomal subunit protein uS12 (143 aa).

Residues 1–19 (MGKPRGIRTARKHVNHRRE) are compositionally biased toward basic residues. Residues 1–21 (MGKPRGIRTARKHVNHRREQR) are disordered. Pro62 bears the Hydroxyproline mark.

It belongs to the universal ribosomal protein uS12 family. In terms of assembly, component of the 40S small ribosomal subunit.

The protein localises to the cytoplasm. It is found in the cytosol. The protein resides in the rough endoplasmic reticulum. In Papilio dardanus (African swallowtail butterfly), this protein is Small ribosomal subunit protein uS12 (RpS23).